We begin with the raw amino-acid sequence, 433 residues long: Serine hydroxymethyltransferase (433 aa).

Residues Leu131 and 135 to 137 contribute to the (6S)-5,6,7,8-tetrahydrofolate site; that span reads GHL. Lys240 carries the post-translational modification N6-(pyridoxal phosphate)lysine.

This sequence belongs to the SHMT family. In terms of assembly, homodimer. Pyridoxal 5'-phosphate is required as a cofactor.

Its subcellular location is the cytoplasm. The enzyme catalyses (6R)-5,10-methylene-5,6,7,8-tetrahydrofolate + glycine + H2O = (6S)-5,6,7,8-tetrahydrofolate + L-serine. It participates in one-carbon metabolism; tetrahydrofolate interconversion. It functions in the pathway amino-acid biosynthesis; glycine biosynthesis; glycine from L-serine: step 1/1. In terms of biological role, catalyzes the reversible interconversion of serine and glycine with tetrahydrofolate (THF) serving as the one-carbon carrier. This reaction serves as the major source of one-carbon groups required for the biosynthesis of purines, thymidylate, methionine, and other important biomolecules. Also exhibits THF-independent aldolase activity toward beta-hydroxyamino acids, producing glycine and aldehydes, via a retro-aldol mechanism. In Bifidobacterium adolescentis (strain ATCC 15703 / DSM 20083 / NCTC 11814 / E194a), this protein is Serine hydroxymethyltransferase.